A 476-amino-acid polypeptide reads, in one-letter code: Cytochrome c oxidase subunit 1 (476 aa).

A helical membrane pass occupies residues 19–39; it reads LYYLWFSFLFGSYGFLLSVIL. A Ca(2+)-binding site is contributed by E42. A run of 8 helical transmembrane segments spans residues 61-81, 105-125, 151-171, 194-214, 240-260, 278-298, 310-330, and 345-365; these read MIFT…GLFG, ISLL…AAEF, VIIF…LNFI, LIIT…GVLM, LFWF…FGVI, MILA…HHMY, FTST…NWIC, and LLSL…VILG. Position 66 (H66) interacts with Fe(II)-heme a. Position 246 (H246) interacts with Cu cation. Positions 246–250 form a cross-link, 1'-histidyl-3'-tyrosine (His-Tyr); that stretch reads HPEVY. Residue Y250 participates in O2 binding. The Cu cation site is built by H295 and H296. The Mg(2+) site is built by H374 and D375. 2 helical membrane-spanning segments follow: residues 379-399 and 415-435; these read VIAH…FTTV and SIVI…FLPM. H382 provides a ligand contact to heme a3. H384 is a Fe(II)-heme a binding site. P448 is a binding site for Ca(2+). A helical transmembrane segment spans residues 455–475; that stretch reads NGWNMICSIGSTMTLFGLLIF.

The protein belongs to the heme-copper respiratory oxidase family. Component of the cytochrome c oxidase (complex IV, CIV), a multisubunit enzyme composed of a catalytic core of 3 subunits and several supernumerary subunits. The complex exists as a monomer or a dimer and forms supercomplexes (SCs) in the inner mitochondrial membrane with ubiquinol-cytochrome c oxidoreductase (cytochrome b-c1 complex, complex III, CIII). Heme serves as cofactor. The cofactor is Cu cation.

Its subcellular location is the mitochondrion inner membrane. It catalyses the reaction 4 Fe(II)-[cytochrome c] + O2 + 8 H(+)(in) = 4 Fe(III)-[cytochrome c] + 2 H2O + 4 H(+)(out). It participates in energy metabolism; oxidative phosphorylation. Its function is as follows. Component of the cytochrome c oxidase, the last enzyme in the mitochondrial electron transport chain which drives oxidative phosphorylation. The respiratory chain contains 3 multisubunit complexes succinate dehydrogenase (complex II, CII), ubiquinol-cytochrome c oxidoreductase (cytochrome b-c1 complex, complex III, CIII) and cytochrome c oxidase (complex IV, CIV), that cooperate to transfer electrons derived from NADH and succinate to molecular oxygen, creating an electrochemical gradient over the inner membrane that drives transmembrane transport and the ATP synthase. Cytochrome c oxidase is the component of the respiratory chain that catalyzes the reduction of oxygen to water. Electrons originating from reduced cytochrome c in the intermembrane space (IMS) are transferred via the dinuclear copper A center (CU(A)) of subunit 2 and heme A of subunit 1 to the active site in subunit 1, a binuclear center (BNC) formed by heme A3 and copper B (CU(B)). The BNC reduces molecular oxygen to 2 water molecules using 4 electrons from cytochrome c in the IMS and 4 protons from the mitochondrial matrix. This Plasmodium falciparum protein is Cytochrome c oxidase subunit 1 (MT-CO1).